The primary structure comprises 186 residues: ATP synthase subunit delta (186 aa).

This sequence belongs to the ATPase delta chain family. In terms of assembly, F-type ATPases have 2 components, F(1) - the catalytic core - and F(0) - the membrane proton channel. F(1) has five subunits: alpha(3), beta(3), gamma(1), delta(1), epsilon(1). CF(0) has four main subunits: a(1), b(1), b'(1) and c(10-14). The alpha and beta chains form an alternating ring which encloses part of the gamma chain. F(1) is attached to F(0) by a central stalk formed by the gamma and epsilon chains, while a peripheral stalk is formed by the delta, b and b' chains.

It localises to the cell inner membrane. F(1)F(0) ATP synthase produces ATP from ADP in the presence of a proton or sodium gradient. F-type ATPases consist of two structural domains, F(1) containing the extramembraneous catalytic core and F(0) containing the membrane proton channel, linked together by a central stalk and a peripheral stalk. During catalysis, ATP synthesis in the catalytic domain of F(1) is coupled via a rotary mechanism of the central stalk subunits to proton translocation. In terms of biological role, this protein is part of the stalk that links CF(0) to CF(1). It either transmits conformational changes from CF(0) to CF(1) or is implicated in proton conduction. The chain is ATP synthase subunit delta from Roseobacter denitrificans (strain ATCC 33942 / OCh 114) (Erythrobacter sp. (strain OCh 114)).